Reading from the N-terminus, the 492-residue chain is FAD-linked oxidoreductase pgmH (492 aa).

In terms of domain architecture, FAD-binding PCMH-type spans 54–224 (SIRLATLVVY…TEFKYRVHKQ (171 aa)).

It belongs to the oxygen-dependent FAD-linked oxidoreductase family. Requires FAD as cofactor.

It functions in the pathway pigment biosynthesis. The protein operates within secondary metabolite biosynthesis. In terms of biological role, FAD-linked oxidoreductase; part of the gene cluster that mediates the biosynthesis of pleosporalin A, ascomycone A, as well as a third cryptic naphthoquinone derived pigment, all responsible for the coloration of conidia. Essential for the production of pleosporalin A, but not the 2 other final products. The pathway begins with the biosynthesis of the cyclized heptaketide 3-acetonyl-1,6,8-trihydroxy-2-naphthaldehyde by the NR-PKS pgmA. The C-6 hydroxyl group is further methylated by the O-methyltransferase pgmB to yield fusarubinaldehyde which is in turn oxidized by the cytochrome P450 monooxygenase pgmC at C-9. The C-1 hydroxyl group is then methylated spontaneously. Although pgmE, pgmD and pgmH are essential for the production of pleosporalin A, it is not the case for the 2 other final products and it remains difficult to assign a specific function to each enzyme. PgmF and pgmG seem not to be involved in pigment biosynthesis although they were regulated by the cluster-specific transcription factor pgmR. This Aspergillus terreus protein is FAD-linked oxidoreductase pgmH.